A 283-amino-acid chain; its full sequence is Protein/nucleic acid deglycase HchA (283 aa).

3 residues coordinate Zn(2+): His86, Glu91, and His123. The Nucleophile role is filled by Cys185.

The protein belongs to the peptidase C56 family. HchA subfamily. In terms of assembly, homodimer.

Its subcellular location is the cytoplasm. It catalyses the reaction N(omega)-(1-hydroxy-2-oxopropyl)-L-arginyl-[protein] + H2O = lactate + L-arginyl-[protein] + H(+). The catalysed reaction is N(6)-(1-hydroxy-2-oxopropyl)-L-lysyl-[protein] + H2O = lactate + L-lysyl-[protein] + H(+). It carries out the reaction S-(1-hydroxy-2-oxopropyl)-L-cysteinyl-[protein] + H2O = lactate + L-cysteinyl-[protein] + H(+). The enzyme catalyses N(omega)-(1-hydroxy-2-oxoethyl)-L-arginyl-[protein] + H2O = L-arginyl-[protein] + glycolate + H(+). It catalyses the reaction N(6)-(1-hydroxy-2-oxoethyl)-L-lysyl-[protein] + H2O = glycolate + L-lysyl-[protein] + H(+). The catalysed reaction is S-(1-hydroxy-2-oxoethyl)-L-cysteinyl-[protein] + H2O = glycolate + L-cysteinyl-[protein] + H(+). It carries out the reaction N(2)-(1-hydroxy-2-oxopropyl)-dGTP + H2O = lactate + dGTP + H(+). The enzyme catalyses N(2)-(1-hydroxy-2-oxopropyl)-GTP + H2O = lactate + GTP + H(+). It catalyses the reaction N(2)-(1-hydroxy-2-oxopropyl)-GDP + H2O = lactate + GDP + H(+). The catalysed reaction is N(2)-(1-hydroxy-2-oxopropyl)-GMP + H2O = lactate + GMP + H(+). It carries out the reaction N(2)-(1-hydroxy-2-oxoethyl)-dGTP + H2O = dGTP + glycolate + H(+). The enzyme catalyses N(2)-(1-hydroxy-2-oxoethyl)-GTP + H2O = glycolate + GTP + H(+). It catalyses the reaction N(2)-(1-hydroxy-2-oxoethyl)-GDP + H2O = glycolate + GDP + H(+). The catalysed reaction is N(2)-(1-hydroxy-2-oxoethyl)-GMP + H2O = glycolate + GMP + H(+). It carries out the reaction an N(2)-(1-hydroxy-2-oxopropyl)-guanosine in RNA + H2O = a guanosine in RNA + lactate + H(+). The enzyme catalyses an N(2)-(1-hydroxy-2-oxopropyl)-2'-deoxyguanosine in DNA + H2O = a 2'-deoxyguanosine in DNA + lactate + H(+). It catalyses the reaction an N(2)-(1-hydroxy-2-oxoethyl)-guanosine in RNA + H2O = a guanosine in RNA + glycolate + H(+). The catalysed reaction is an N(2)-(1-hydroxy-2-oxoethyl)-2'-deoxyguanosine in DNA + H2O = a 2'-deoxyguanosine in DNA + glycolate + H(+). Its function is as follows. Protein and nucleotide deglycase that catalyzes the deglycation of the Maillard adducts formed between amino groups of proteins or nucleotides and reactive carbonyl groups of glyoxals. Thus, functions as a protein deglycase that repairs methylglyoxal- and glyoxal-glycated proteins, and releases repaired proteins and lactate or glycolate, respectively. Deglycates cysteine, arginine and lysine residues in proteins, and thus reactivates these proteins by reversing glycation by glyoxals. Acts on early glycation intermediates (hemithioacetals and aminocarbinols), preventing the formation of Schiff bases and advanced glycation endproducts (AGE). Also functions as a nucleotide deglycase able to repair glycated guanine in the free nucleotide pool (GTP, GDP, GMP, dGTP) and in DNA and RNA. Is thus involved in a major nucleotide repair system named guanine glycation repair (GG repair), dedicated to reversing methylglyoxal and glyoxal damage via nucleotide sanitization and direct nucleic acid repair. Plays an important role in protecting cells from carbonyl stress. This is Protein/nucleic acid deglycase HchA from Shigella sonnei (strain Ss046).